The primary structure comprises 468 residues: Probable 1,4-beta-D-glucan cellobiohydrolase C (468 aa).

Positions 1–18 (MGRVSSLALALLLPAVQA) are cleaved as a signal peptide. The region spanning 19–54 (QQTLWGQCGGIGWTGPTNCVAGAACSTQNPYYAQCL) is the CBM1 domain. Cystine bridges form between cysteine 26–cysteine 43 and cysteine 37–cysteine 53. A thr-rich linker region spans residues 57 to 106 (TATTSTTLTTTTRVTTTTTSTTSKSSSTGSTTTTKSTGTTTTSGSSTTIT). The interval 68–107 (TRVTTTTTSTTSKSSSTGSTTTTKSTGTTTTSGSSTTITS) is disordered. A catalytic region spans residues 107–468 (SAPSGNPFSG…QLLKNANPAF (362 aa)). Residue aspartate 198 is part of the active site. 2 disulfides stabilise this stretch: cysteine 199–cysteine 258 and cysteine 390–cysteine 437. Aspartate 244 serves as the catalytic Proton donor. The Nucleophile role is filled by aspartate 423.

The protein belongs to the glycosyl hydrolase 6 (cellulase B) family.

It localises to the secreted. It carries out the reaction Hydrolysis of (1-&gt;4)-beta-D-glucosidic linkages in cellulose and cellotetraose, releasing cellobiose from the non-reducing ends of the chains.. The biological conversion of cellulose to glucose generally requires three types of hydrolytic enzymes: (1) Endoglucanases which cut internal beta-1,4-glucosidic bonds; (2) Exocellobiohydrolases that cut the disaccharide cellobiose from the non-reducing end of the cellulose polymer chain; (3) Beta-1,4-glucosidases which hydrolyze the cellobiose and other short cello-oligosaccharides to glucose. The chain is Probable 1,4-beta-D-glucan cellobiohydrolase C (cbhC) from Aspergillus terreus (strain NIH 2624 / FGSC A1156).